Consider the following 355-residue polypeptide: Putative cyclin-A3-1 (355 aa).

This sequence belongs to the cyclin family. Cyclin AB subfamily.

This chain is Putative cyclin-A3-1 (CYCA3-1), found in Arabidopsis thaliana (Mouse-ear cress).